A 95-amino-acid polypeptide reads, in one-letter code: Beta-alanine degradation protein BauB (95 aa).

A Cupin type-2 domain is found at 23–90 (WRFAPGAETG…NASAHEVVFV (68 aa)).

Involved in the degradation of beta-alanine. The polypeptide is Beta-alanine degradation protein BauB (bauB) (Pseudomonas aeruginosa (strain ATCC 15692 / DSM 22644 / CIP 104116 / JCM 14847 / LMG 12228 / 1C / PRS 101 / PAO1)).